Consider the following 343-residue polypeptide: Phosphoribosylformylglycinamidine cyclo-ligase (343 aa).

This sequence belongs to the AIR synthase family.

The protein localises to the cytoplasm. It carries out the reaction 2-formamido-N(1)-(5-O-phospho-beta-D-ribosyl)acetamidine + ATP = 5-amino-1-(5-phospho-beta-D-ribosyl)imidazole + ADP + phosphate + H(+). It functions in the pathway purine metabolism; IMP biosynthesis via de novo pathway; 5-amino-1-(5-phospho-D-ribosyl)imidazole from N(2)-formyl-N(1)-(5-phospho-D-ribosyl)glycinamide: step 2/2. The chain is Phosphoribosylformylglycinamidine cyclo-ligase from Staphylococcus epidermidis (strain ATCC 35984 / DSM 28319 / BCRC 17069 / CCUG 31568 / BM 3577 / RP62A).